A 217-amino-acid chain; its full sequence is Chorionic somatomammotropin hormone 2 (217 aa).

Residues 1–26 (MAAGSRTSLLLAFALLCLPWLQEAGA) form the signal peptide. His44 contacts Zn(2+). An intrachain disulfide couples Cys79 to Cys191. A Zn(2+)-binding site is contributed by Glu200. A disulfide bridge links Cys208 with Cys215.

Belongs to the somatotropin/prolactin family. Can be found in a monomeric as well as dimeric form.

It localises to the secreted. Its function is as follows. Produced only during pregnancy and is involved in stimulating lactation, fetal growth and metabolism. Does not interact with GHR but only activates PRLR through zinc-induced dimerization. The chain is Chorionic somatomammotropin hormone 2 (CSH2) from Homo sapiens (Human).